The following is a 337-amino-acid chain: Phosphatidate cytidylyltransferase, mitochondrial (337 aa).

Belongs to the TAM41 family. It depends on Mg(2+) as a cofactor.

Its subcellular location is the mitochondrion inner membrane. The enzyme catalyses a 1,2-diacyl-sn-glycero-3-phosphate + CTP + H(+) = a CDP-1,2-diacyl-sn-glycerol + diphosphate. It participates in phospholipid metabolism; CDP-diacylglycerol biosynthesis; CDP-diacylglycerol from sn-glycerol 3-phosphate: step 3/3. Catalyzes the conversion of phosphatidic acid (PA) to CDP-diacylglycerol (CDP-DAG), an essential intermediate in the synthesis of phosphatidylglycerol, cardiolipin and phosphatidylinositol. The sequence is that of Phosphatidate cytidylyltransferase, mitochondrial (Tamm41) from Mus musculus (Mouse).